We begin with the raw amino-acid sequence, 244 residues long: Uridylate kinase (244 aa).

18 to 21 (KISG) lines the ATP pocket. The involved in allosteric activation by GTP stretch occupies residues 26-31 (GDQGYG). Position 60 (Gly-60) interacts with UMP. ATP is bound by residues Gly-61 and Arg-65. UMP-binding positions include Asp-80 and 141–148 (TGNPYFTT). Residues Thr-168, Tyr-174, and Asp-177 each contribute to the ATP site.

The protein belongs to the UMP kinase family. In terms of assembly, homohexamer.

The protein resides in the cytoplasm. It catalyses the reaction UMP + ATP = UDP + ADP. It functions in the pathway pyrimidine metabolism; CTP biosynthesis via de novo pathway; UDP from UMP (UMPK route): step 1/1. Allosterically activated by GTP. Inhibited by UTP. In terms of biological role, catalyzes the reversible phosphorylation of UMP to UDP. The sequence is that of Uridylate kinase from Paracoccus denitrificans (strain Pd 1222).